The chain runs to 371 residues: Lombricine kinase (371 aa).

The Phosphagen kinase N-terminal domain maps to 1-86 (MPKFTARQNF…FDAVINEKHG (86 aa)). The Phosphagen kinase C-terminal domain occupies 113-355 (YVKSARIRTG…GKLIEYEKLL (243 aa)). ATP contacts are provided by residues 116–120 (SARIR), H179, R224, R280, 308–313 (RGTGGE), and D323.

This sequence belongs to the ATP:guanido phosphotransferase family. In terms of assembly, homodimer.

The catalysed reaction is L-lombricine + ATP = N-phospho-L-lombricine + ADP + H(+). In Eisenia fetida (Red wiggler worm), this protein is Lombricine kinase.